A 342-amino-acid chain; its full sequence is Outer membrane porin C (342 aa).

It belongs to the Gram-negative porin family. As to quaternary structure, homotrimer.

Its subcellular location is the cell outer membrane. Functionally, forms pores that allow passive diffusion of small molecules across the outer membrane. In R.aquatilis OmpC is involved in the adhesion to wheat roots. This is Outer membrane porin C (ompC) from Rahnella aquatilis.